Consider the following 314-residue polypeptide: Three-prime repair exonuclease 1 (314 aa).

D18 and E20 together coordinate Mg(2+). Substrate is bound at residue E20–A21. S78 bears the Phosphoserine mark. Position 129 (Y129) interacts with substrate. S167 carries the post-translational modification Phosphoserine. H195 acts as the Proton donor/acceptor in catalysis. D200 serves as a coordination point for Mg(2+). A substrate-binding site is contributed by D200. The tract at residues T236–E314 is necessary for endoplasmic reticulum localization. Residues R240–D278 are disordered. Residues P243–E314 are interaction with UBQLN1. Low complexity predominate over residues A247–T260. S261 is modified (phosphoserine). The segment at A281–E314 is necessary for cytoplasmic retention.

Belongs to the exonuclease superfamily. TREX family. As to quaternary structure, homodimer. Interacts (via proline-rich region) with TCERG1/CA150 (via the second WW domain). Component of the SET complex, composed of at least ANP32A, APEX1, HMGB2, NME1, SET and TREX1. Within this complex, directly interacts with SET; this interaction does not result in TREX1 inhibition. Also interacts with NME1, but only following translocation to the nucleus. Directly interacts with UBQLN1 (via ubiquitin-like domain); the interaction may control TREX1 subcellular location. The cofactor is Mg(2+). In terms of processing, ubiquitinated, but not targeted to proteasomal degradation. Ubiquitination may be important for interaction with UBQLN1. Detected in thymus, spleen, liver, brain, heart, small intestine and colon.

It is found in the nucleus. Its subcellular location is the cytoplasm. The protein resides in the cytosol. It localises to the endoplasmic reticulum membrane. It catalyses the reaction Exonucleolytic cleavage in the 3'- to 5'-direction to yield nucleoside 5'-phosphates.. Functionally, major cellular 3'-to-5' DNA exonuclease which digests single-stranded DNA (ssDNA) and double-stranded DNA (dsDNA) with mismatched 3' termini. Prevents cell-intrinsic initiation of autoimmunity. Acts by metabolizing DNA fragments from endogenous retroelements, including L1, LTR and SINE elements. Plays a key role in degradation of DNA fragments at cytosolic micronuclei arising from genome instability: its association with the endoplasmic reticulum membrane directs TREX1 to ruptured micronuclei, leading to micronuclear DNA degradation. Micronuclear DNA degradation is required to limit CGAS activation and subsequent inflammation. Unless degraded, these DNA fragments accumulate in the cytosol and activate the cGAS-STING innate immune signaling, leading to the production of type I interferon. Prevents chronic ATM-dependent checkpoint activation, by processing ssDNA polynucleotide species arising from the processing of aberrant DNA replication intermediates. Inefficiently degrades oxidized DNA, such as that generated upon antimicrobial reactive oxygen production or upon absorption of UV light. During GZMA-mediated cell death, contributes to DNA damage in concert with NME1. NME1 nicks one strand of DNA and TREX1 removes bases from the free 3' end to enhance DNA damage and prevent DNA end reannealing and rapid repair. This Homo sapiens (Human) protein is Three-prime repair exonuclease 1.